The sequence spans 205 residues: Thymidylate kinase (205 aa).

11–18 is a binding site for ATP; sequence GLDKSGKT.

The protein belongs to the thymidylate kinase family. As to quaternary structure, homodimer; the dimer arrangement is orthogonal and not antiparallel as in human enzyme.

It carries out the reaction dTMP + ATP = dTDP + ADP. It functions in the pathway pyrimidine metabolism; dTTP biosynthesis. Its function is as follows. Poxvirus TMP kinase is able to phosphorylate dTMP, dUMP and also dGMP from any purine and pyrimidine nucleoside triphosphate. The large substrate specificity is explained by the presence of a canal connecting the edge of the dimer interface to the TMP base binding pocket, canal not found in the human homolog. The protein is Thymidylate kinase (OPG178) of Homo sapiens (Human).